The primary structure comprises 143 residues: Large ribosomal subunit protein eL28z (143 aa).

Belongs to the eukaryotic ribosomal protein eL28 family. As to quaternary structure, component of the large ribosomal subunit. As to expression, expressed in seedlings, roots, stems, leaves, inflorescences and siliques.

It localises to the cytoplasm. The protein resides in the nucleus. The protein localises to the nucleolus. It is found in the nucleoplasm. In terms of biological role, component of the large ribosomal subunit. Essential in leaf polarity establishment, probably having a role for translation in leaf dorsoventral patterning to specify leaf adaxial identity. This chain is Large ribosomal subunit protein eL28z, found in Arabidopsis thaliana (Mouse-ear cress).